The sequence spans 273 residues: Large ribosomal subunit protein uL2 (273 aa).

A disordered region spans residues 221-263; the sequence is RGTAMNPVDHPHGGGEGRNFGKHPVSPWGLKTKGKKTRRNKRT. A compositionally biased stretch (basic residues) spans 252 to 263; the sequence is TKGKKTRRNKRT.

Belongs to the universal ribosomal protein uL2 family. As to quaternary structure, part of the 50S ribosomal subunit. Forms a bridge to the 30S subunit in the 70S ribosome.

Its function is as follows. One of the primary rRNA binding proteins. Required for association of the 30S and 50S subunits to form the 70S ribosome, for tRNA binding and peptide bond formation. It has been suggested to have peptidyltransferase activity; this is somewhat controversial. Makes several contacts with the 16S rRNA in the 70S ribosome. The polypeptide is Large ribosomal subunit protein uL2 (Buchnera aphidicola subsp. Cinara cedri (strain Cc)).